The sequence spans 336 residues: Aspartate--ammonia ligase (336 aa).

The protein belongs to the class-II aminoacyl-tRNA synthetase family. AsnA subfamily.

The protein localises to the cytoplasm. It catalyses the reaction L-aspartate + NH4(+) + ATP = L-asparagine + AMP + diphosphate + H(+). The protein operates within amino-acid biosynthesis; L-asparagine biosynthesis; L-asparagine from L-aspartate (ammonia route): step 1/1. This chain is Aspartate--ammonia ligase, found in Ligilactobacillus salivarius (strain UCC118) (Lactobacillus salivarius).